A 346-amino-acid chain; its full sequence is Holliday junction branch migration complex subunit RuvB (346 aa).

The large ATPase domain (RuvB-L) stretch occupies residues 4-185 (SDRIITASPF…FGIVSRLEFY (182 aa)). ATP is bound by residues leucine 24, arginine 25, glycine 66, lysine 69, threonine 70, threonine 71, 132 to 134 (EDY), arginine 175, tyrosine 185, and arginine 222. Residue threonine 70 coordinates Mg(2+). The interval 186–256 (TSDELSKIVT…VADAALQMLD (71 aa)) is small ATPAse domain (RuvB-S). Residues 259–346 (AAGLDVLDRK…AATPGLFNPD (88 aa)) are head domain (RuvB-H). Arginine 295, arginine 314, and arginine 319 together coordinate DNA.

Belongs to the RuvB family. In terms of assembly, homohexamer. Forms an RuvA(8)-RuvB(12)-Holliday junction (HJ) complex. HJ DNA is sandwiched between 2 RuvA tetramers; dsDNA enters through RuvA and exits via RuvB. An RuvB hexamer assembles on each DNA strand where it exits the tetramer. Each RuvB hexamer is contacted by two RuvA subunits (via domain III) on 2 adjacent RuvB subunits; this complex drives branch migration. In the full resolvosome a probable DNA-RuvA(4)-RuvB(12)-RuvC(2) complex forms which resolves the HJ.

The protein localises to the cytoplasm. The enzyme catalyses ATP + H2O = ADP + phosphate + H(+). In terms of biological role, the RuvA-RuvB-RuvC complex processes Holliday junction (HJ) DNA during genetic recombination and DNA repair, while the RuvA-RuvB complex plays an important role in the rescue of blocked DNA replication forks via replication fork reversal (RFR). RuvA specifically binds to HJ cruciform DNA, conferring on it an open structure. The RuvB hexamer acts as an ATP-dependent pump, pulling dsDNA into and through the RuvAB complex. RuvB forms 2 homohexamers on either side of HJ DNA bound by 1 or 2 RuvA tetramers; 4 subunits per hexamer contact DNA at a time. Coordinated motions by a converter formed by DNA-disengaged RuvB subunits stimulates ATP hydrolysis and nucleotide exchange. Immobilization of the converter enables RuvB to convert the ATP-contained energy into a lever motion, pulling 2 nucleotides of DNA out of the RuvA tetramer per ATP hydrolyzed, thus driving DNA branch migration. The RuvB motors rotate together with the DNA substrate, which together with the progressing nucleotide cycle form the mechanistic basis for DNA recombination by continuous HJ branch migration. Branch migration allows RuvC to scan DNA until it finds its consensus sequence, where it cleaves and resolves cruciform DNA. This Nitrosomonas eutropha (strain DSM 101675 / C91 / Nm57) protein is Holliday junction branch migration complex subunit RuvB.